Reading from the N-terminus, the 382-residue chain is Dual-specificity RNA methyltransferase RlmN (382 aa).

The active-site Proton acceptor is the Glu91. In terms of domain architecture, Radical SAM core spans 97-339 (ETDRGTLCIS…TTVRKTRGDD (243 aa)). A disulfide bridge connects residues Cys104 and Cys344. Residues Cys111, Cys115, and Cys118 each contribute to the [4Fe-4S] cluster site. S-adenosyl-L-methionine is bound by residues 165–166 (GE), Ser197, 219–221 (SLH), and Asn301. The active-site S-methylcysteine intermediate is Cys344.

Belongs to the radical SAM superfamily. RlmN family. The cofactor is [4Fe-4S] cluster.

The protein resides in the cytoplasm. It catalyses the reaction adenosine(2503) in 23S rRNA + 2 reduced [2Fe-2S]-[ferredoxin] + 2 S-adenosyl-L-methionine = 2-methyladenosine(2503) in 23S rRNA + 5'-deoxyadenosine + L-methionine + 2 oxidized [2Fe-2S]-[ferredoxin] + S-adenosyl-L-homocysteine. The enzyme catalyses adenosine(37) in tRNA + 2 reduced [2Fe-2S]-[ferredoxin] + 2 S-adenosyl-L-methionine = 2-methyladenosine(37) in tRNA + 5'-deoxyadenosine + L-methionine + 2 oxidized [2Fe-2S]-[ferredoxin] + S-adenosyl-L-homocysteine. Its function is as follows. Specifically methylates position 2 of adenine 2503 in 23S rRNA and position 2 of adenine 37 in tRNAs. m2A2503 modification seems to play a crucial role in the proofreading step occurring at the peptidyl transferase center and thus would serve to optimize ribosomal fidelity. The protein is Dual-specificity RNA methyltransferase RlmN of Polaromonas sp. (strain JS666 / ATCC BAA-500).